Reading from the N-terminus, the 194-residue chain is Flagellar transcriptional regulator FlhC (194 aa).

4 residues coordinate Zn(2+): cysteine 139, cysteine 142, cysteine 159, and cysteine 162.

It belongs to the FlhC family. Heterohexamer composed of two FlhC and four FlhD subunits. Each FlhC binds a FlhD dimer, forming a heterotrimer, and a hexamer assembles by dimerization of two heterotrimers. Zn(2+) is required as a cofactor.

It is found in the cytoplasm. Its function is as follows. Functions in complex with FlhD as a master transcriptional regulator that regulates transcription of several flagellar and non-flagellar operons by binding to their promoter region. Activates expression of class 2 flagellar genes, including fliA, which is a flagellum-specific sigma factor that turns on the class 3 genes. Also regulates genes whose products function in a variety of physiological pathways. The chain is Flagellar transcriptional regulator FlhC from Serratia marcescens.